The chain runs to 89 residues: Small ribosomal subunit protein uS15 (89 aa).

The protein belongs to the universal ribosomal protein uS15 family. Part of the 30S ribosomal subunit. Forms a bridge to the 50S subunit in the 70S ribosome, contacting the 23S rRNA.

Functionally, one of the primary rRNA binding proteins, it binds directly to 16S rRNA where it helps nucleate assembly of the platform of the 30S subunit by binding and bridging several RNA helices of the 16S rRNA. Its function is as follows. Forms an intersubunit bridge (bridge B4) with the 23S rRNA of the 50S subunit in the ribosome. The sequence is that of Small ribosomal subunit protein uS15 from Brevibacillus brevis (strain 47 / JCM 6285 / NBRC 100599).